The primary structure comprises 1729 residues: Cullin-7 (1729 aa).

Residues 350–388 (DRPRSSARSPGSIFQPQLADVSPGLPATQAQPSFRRSRH) are disordered. Position 371 is a phosphoserine (Ser-371). Residues 392–465 (RSEFASGNTY…HWHMLEILGF (74 aa)) form the CPH domain. The span at 632 to 642 (SEDAAKVEAKE) shows a compositional bias: basic and acidic residues. The disordered stretch occupies residues 632-654 (SEDAAKVEAKEPPSQSPNTPLQR). One can recognise a DOC domain in the interval 845-1024 (PINIPFFDVF…HTRLFYMVRA (180 aa)). A disordered region spans residues 1373-1405 (VGHGASGKEHKSEKEEEAGAAAAVDVAEGEEEE). Residue Lys-1607 forms a Glycyl lysine isopeptide (Lys-Gly) (interchain with G-Cter in NEDD8) linkage.

The protein belongs to the cullin family. Component of the 3M complex, composed of core components CUL7, CCDC8 and OBSL1. Component of the Cul7-RING(FBXW8) complex consisting of CUL7, RBX1, SKP1 and FBXW8. Within the Cul7-RING(FBXW8) complex interacts with FBXW8 and RBX1, but not with SKP1. Interacts with CUL1 (via the C-terminal domain); the interaction seems to be mediated by FBXW8; it is likely specific to FBXW8, but not other F-box proteins. Interacts (via the CPH domain) with p53/TP53; the interaction preferentially involves tetrameric and dimeric p53/TP53; this interaction recruits p53/TP53 for ubiquitination by neddylated CUL1-RBX1. The CUL7-CUL9 heterodimer seems to interact specifically with p53/TP53. Interacts with FBXW8; interaction is mutually exclusive of binding to CUL9 or p53/TP53. Interacts with CUL9; leading to inhibited CUL9 activity. Interacts with OBSL1. Interacts (as part of the 3M complex) with HDAC4 and HDAC5; it is negatively regulated by ANKRA2.

The protein localises to the cytoplasm. The protein resides in the cytoskeleton. Its subcellular location is the microtubule organizing center. It is found in the centrosome. It localises to the perinuclear region. The protein localises to the golgi apparatus. It functions in the pathway protein modification; protein ubiquitination. Its function is as follows. Core component of the 3M and Cul7-RING(FBXW8) complexes, which mediate the ubiquitination and subsequent proteasomal degradation of target proteins. Core component of the 3M complex, a complex required to regulate microtubule dynamics and genome integrity. It is unclear how the 3M complex regulates microtubules, it could act by controlling the level of a microtubule stabilizer. The Cul7-RING(FBXW8) complex alone lacks ubiquitination activity and does not promote polyubiquitination and proteasomal degradation of p53/TP53. However it mediates recruitment of p53/TP53 for ubiquitination by neddylated CUL1-RBX1. Interaction with CUL9 is required to inhibit CUL9 activity and ubiquitination of BIRC5. The Cul7-RING(FBXW8) complex also mediates ubiquitination and consequent degradation of target proteins such as GORASP1, IRS1 and MAP4K1/HPK1. Ubiquitination of GORASP1 regulates Golgi morphogenesis and dendrite patterning in brain. Mediates ubiquitination and degradation of IRS1 in a mTOR-dependent manner: the Cul7-RING(FBXW8) complex recognizes and binds IRS1 previously phosphorylated by S6 kinase (RPS6KB1 or RPS6KB2). The Cul7-RING(FBXW8) complex also mediates ubiquitination of MAP4K1/HPK1: recognizes and binds autophosphorylated MAP4K1/HPK1, leading to its degradation, thereby affecting cell proliferation and differentiation. Acts as a regulator in trophoblast cell epithelial-mesenchymal transition and placental development. While the Cul7-RING(FBXW8) and the 3M complexes are associated and involved in common processes, CUL7 and the Cul7-RING(FBXW8) complex may have additional functions. Probably plays a role in the degradation of proteins involved in endothelial proliferation and/or differentiation. In Pongo abelii (Sumatran orangutan), this protein is Cullin-7 (CUL7).